We begin with the raw amino-acid sequence, 72 residues long: Translation initiation factor IF-1 (72 aa).

An S1-like domain is found at 1–72; sequence MSKSDIIEMQ…TRGRITWRAK (72 aa).

This sequence belongs to the IF-1 family. In terms of assembly, component of the 30S ribosomal translation pre-initiation complex which assembles on the 30S ribosome in the order IF-2 and IF-3, IF-1 and N-formylmethionyl-tRNA(fMet); mRNA recruitment can occur at any time during PIC assembly.

Its subcellular location is the cytoplasm. Its function is as follows. One of the essential components for the initiation of protein synthesis. Stabilizes the binding of IF-2 and IF-3 on the 30S subunit to which N-formylmethionyl-tRNA(fMet) subsequently binds. Helps modulate mRNA selection, yielding the 30S pre-initiation complex (PIC). Upon addition of the 50S ribosomal subunit IF-1, IF-2 and IF-3 are released leaving the mature 70S translation initiation complex. This chain is Translation initiation factor IF-1, found in Clostridium perfringens (strain 13 / Type A).